The primary structure comprises 776 residues: MAEPRQEFEVMEDHAGTYGLGDRKDQGGYTMHQDQEGDTDAGLKESPLQTPTEDGSEEPGSETSDAKSTPTAEDVTAPLVDEGAPGKQAAAQPHTEIPEGTTAEEAGIGDTPSLEDEAAGHVTQEPESGKVVQEGFLREPGPPGLSHQLMSGMPGAPLLPEGPREATRQPSGTGPEDTEGGRHAPELLKHQLLGDLHQEGPPLKGAGGKERPGSKEEVDEDRDVDESSLQDSPPSKASPAQDGRPPQTAAREATSIPGFPAEGAIPLPVDFLSKVSTEIPASEPDGPSAGRAKGQDAHLEFTFHVEITPNVQKEQAHSEEHLGRAAFPGAPGEGPEARGPSLGEDTKEADLPEPSEKQPAAAPRGKPVSRVPQLKARMVSKSKDGTGSDDKKAKTSTRSSAKTLKNRPCLSPKHPTPGSSDPLIQPSSPAVCPEPPSSPKYVSSVTPRTGSSGAKEMKLKGADGKTKIATPRGAAPPGQKGQANATRIPAKTPPAPKTPPSSATKQVQRRPPPAGPRSERGEPPKSGDRSGYSSPGSPGTPGSRSRTPSLPTPPTREPKKVAVVRTPPKSPSSAKSRLQTAPVPMPDLKNVKSKIGSTENLKHQPGGGKVQIINKKLDLSNVQSKCGSKDNIKHVPGGGSVQIVYKPVDLSKVTSKCGSLGNIHHKPGGGQVEVKSEKLDFKDRVQSKIGSLDNITHVPGGGNKKIETHKLTFRENAKAKTDHGAEIVYKSPVVSGDTSPRHLSNVSSTGSIDMVDSPQLATLADEVSASLAKQGL.

Positions 1–26 are enriched in basic and acidic residues; it reads MAEPRQEFEVMEDHAGTYGLGDRKDQ. The segment at 1 to 591 is disordered; sequence MAEPRQEFEV…PVPMPDLKNV (591 aa). A2 is subject to N-acetylalanine. Residues Y18 and Y29 each carry the phosphotyrosine modification. K44 is covalently cross-linked (Glycyl lysine isopeptide (Lys-Gly) (interchain with G-Cter in ubiquitin)). Residues S46 and S61 each carry the phosphoserine modification. Residues 61–71 show a composition bias toward polar residues; that stretch reads SETSDAKSTPT. T69, T71, and T111 each carry phosphothreonine. Basic and acidic residues-rich tracts occupy residues 179-189 and 207-216; these read EGGRHAPELLK and GGKERPGSKE. Phosphoserine is present on S214. Residues 217-228 show a composition bias toward acidic residues; that stretch reads EVDEDRDVDESS. Composition is skewed to basic and acidic residues over residues 293-303 and 314-323; these read KGQDAHLEFTF and EQAHSEEHLG. Residues 324 to 340 show a composition bias toward low complexity; sequence RAAFPGAPGEGPEARGP. 2 stretches are compositionally biased toward basic and acidic residues: residues 344–356 and 381–393; these read EDTKEADLPEPSE and KSKDGTGSDDKKA. Over residues 440-452 the composition is skewed to polar residues; sequence KYVSSVTPRTGSS. The segment covering 455-466 has biased composition (basic and acidic residues); that stretch reads KEMKLKGADGKT. T470 bears the Phosphothreonine mark. Position 472 is an omega-N-methylarginine (R472). Position 480 is an N6,N6-dimethyllysine; alternate (K480). At K480 the chain carries N6-acetyllysine; alternate. Residues T486, T492, and T498 each carry the phosphothreonine modification. 3 positions are modified to phosphoserine: S502, S526, and S530. The span at 517 to 528 shows a compositional bias: basic and acidic residues; that stretch reads RSERGEPPKSGD. Low complexity predominate over residues 529–549; the sequence is RSGYSSPGSPGTPGSRSRTPS. The residue at position 532 (Y532) is a Phosphotyrosine. Phosphoserine is present on residues S533, S534, and S537. Phosphothreonine occurs at positions 540 and 547. Residue S549 is modified to Phosphoserine. T552 carries the phosphothreonine modification. K560 carries the post-translational modification N6-acetyllysine. Position 566 is a phosphothreonine (T566). S570 and S572 each carry phosphoserine. Tau/MAP repeat units follow at residues 579–609, 610–640, 641–671, and 672–703; these read QTAPVPMPDLKNVKSKIGSTENLKHQPGGGK, VQIINKKLDLSNVQSKCGSKDNIKHVPGGGS, VQIVYKPVDLSKVTSKCGSLGNIHHKPGGGQ, and VEVKSEKLDFKDRVQSKIGSLDNITHVPGGGN. K589 is covalently cross-linked (Glycyl lysine isopeptide (Lys-Gly) (interchain with G-Cter in ubiquitin)). At K594 the chain carries N6-acetyllysine; alternate. An N6-methyllysine; alternate modification is found at K594. K594 participates in a covalent cross-link: Glycyl lysine isopeptide (Lys-Gly) (interchain with G-Cter in ubiquitin); alternate. S597 is subject to Phosphoserine. K602 is covalently cross-linked (Glycyl lysine isopeptide (Lys-Gly) (interchain with G-Cter in ubiquitin)). At K616 the chain carries N6-acetyllysine; alternate. K616 participates in a covalent cross-link: Glycyl lysine isopeptide (Lys-Gly) (interchain with G-Cter in ubiquitin); alternate. Residues S620 and S624 each carry the phosphoserine modification. K625 is subject to N6-acetyllysine. S628 carries the post-translational modification Phosphoserine. K633 carries the post-translational modification N6-acetyllysine; alternate. A Glycyl lysine isopeptide (Lys-Gly) (interchain with G-Cter in ubiquitin); alternate cross-link involves residue K633. S640 is modified (phosphoserine). An N6,N6-dimethyllysine; alternate modification is found at K646. Residues K646, K652, and K656 each carry the N6-acetyllysine; alternate modification. Glycyl lysine isopeptide (Lys-Gly) (interchain with G-Cter in ubiquitin); alternate cross-links involve residues K646, K652, and K656. Residue S659 is modified to Phosphoserine. 3 positions are modified to N6-acetyllysine; alternate: K666, K678, and K682. Residues K666, K678, and K682 each participate in a glycyl lysine isopeptide (Lys-Gly) (interchain with G-Cter in ubiquitin); alternate cross-link. R684 is modified (omega-N-methylarginine). A Phosphoserine modification is found at S687. A Glycyl lysine isopeptide (Lys-Gly) (interchain with G-Cter in ubiquitin) cross-link involves residue K688. Residue S691 is modified to Phosphoserine. K704 is subject to N6-acetyllysine; alternate. K704 participates in a covalent cross-link: Glycyl lysine isopeptide (Lys-Gly) (interchain with G-Cter in ubiquitin); alternate. Residue K710 forms a Glycyl lysine isopeptide (Lys-Gly) (interchain with G-Cter in ubiquitin) linkage. K720 carries the post-translational modification N6-acetyllysine; alternate. A Glycyl lysine isopeptide (Lys-Gly) (interchain with G-Cter in ubiquitin); alternate cross-link involves residue K720. Phosphotyrosine is present on Y729. Phosphoserine is present on residues S731 and S735. The segment at 733 to 752 is disordered; that stretch reads VVSGDTSPRHLSNVSSTGSI. Positions 736–751 are enriched in polar residues; it reads GDTSPRHLSNVSSTGS. Phosphothreonine is present on T738. Phosphoserine occurs at positions 739, 744, 751, and 757. T762 is subject to Phosphothreonine.

As to quaternary structure, interacts with MARK1, MARK2, MARK3 and MARK4. Interacts with SQSTM1 when polyubiquitinated. Interacts with PSMC2 through SQSTM1. Interacts with FKBP4. Binds to CSNK1D. Interacts with SGK1. Interacts with EPM2A; the interaction dephosphorylates MAPT at Ser-396. Interacts with PIN1. Interacts with LRRK2. Interacts with LRP1, leading to endocytosis; this interaction is reduced in the presence of LRPAP1/RAP. Polyubiquitinated. Requires functional TRAF6 and may provoke SQSTM1-dependent degradation by the proteasome. In terms of processing, phosphorylation at various serine and threonine residues in S-P or T-P motifs by proline-directed protein kinases (PDPK1, CDK1, CDK5, GSK3, MAPK) (a few sites per protein in interphase, more in mitosis), and at serine residues in K-X-G-S motifs by MAP/microtubule affinity-regulating kinase (MARK1, MARK2, MARK3 or MARK4), causing detachment from microtubules, and their disassembly. Phosphorylation at Ser-597 by BRSK1 and BRSK2 in neurons affects ability to bind microtubules and plays a role in neuron polarization. Phosphorylated by PHK. Dephosphorylation at several serine and threonine residues by the serine/threonine phosphatase PPP5C. Phosphorylation at Ser-214 by SGK1 mediates microtubule depolymerization and neurite formation in hippocampal neurons.

The protein resides in the cytoplasm. The protein localises to the cytosol. Its subcellular location is the cell membrane. It is found in the cytoskeleton. It localises to the cell projection. The protein resides in the axon. The protein localises to the dendrite. Promotes microtubule assembly and stability, and might be involved in the establishment and maintenance of neuronal polarity. The C-terminus binds axonal microtubules while the N-terminus binds neural plasma membrane components, suggesting that tau functions as a linker protein between both. Axonal polarity is predetermined by tau localization (in the neuronal cell) in the domain of the cell body defined by the centrosome. The short isoforms allow plasticity of the cytoskeleton whereas the longer isoforms may preferentially play a role in its stabilization. This is Microtubule-associated protein tau (MAPT) from Pan troglodytes (Chimpanzee).